We begin with the raw amino-acid sequence, 332 residues long: ADP-L-glycero-D-manno-heptose-6-epimerase (332 aa).

Residues 10–11, 31–32, K38, K53, 75–79, and N92 each bind NADP(+); these read MI, DK, and MGACS. The active-site Proton acceptor is Y145. K149 is a binding site for NADP(+). A substrate-binding site is contributed by N173. 2 residues coordinate NADP(+): V174 and K182. K182 functions as the Proton acceptor in the catalytic mechanism. Residues R184, H191, 205–208, R219, and Y290 each bind substrate; that span reads FKSY.

It belongs to the NAD(P)-dependent epimerase/dehydratase family. HldD subfamily. As to quaternary structure, homopentamer. NADP(+) is required as a cofactor.

The enzyme catalyses ADP-D-glycero-beta-D-manno-heptose = ADP-L-glycero-beta-D-manno-heptose. It functions in the pathway nucleotide-sugar biosynthesis; ADP-L-glycero-beta-D-manno-heptose biosynthesis; ADP-L-glycero-beta-D-manno-heptose from D-glycero-beta-D-manno-heptose 7-phosphate: step 4/4. Its function is as follows. Catalyzes the interconversion between ADP-D-glycero-beta-D-manno-heptose and ADP-L-glycero-beta-D-manno-heptose via an epimerization at carbon 6 of the heptose. The sequence is that of ADP-L-glycero-D-manno-heptose-6-epimerase from Fusobacterium nucleatum subsp. nucleatum (strain ATCC 25586 / DSM 15643 / BCRC 10681 / CIP 101130 / JCM 8532 / KCTC 2640 / LMG 13131 / VPI 4355).